The following is a 352-amino-acid chain: F-box/kelch-repeat protein At1g57790 (352 aa).

In terms of domain architecture, F-box spans Lys10–Ser56. 2 Kelch repeats span residues Val148–Val189 and Val190–Gly234.

The polypeptide is F-box/kelch-repeat protein At1g57790 (Arabidopsis thaliana (Mouse-ear cress)).